The primary structure comprises 311 residues: Probable manganese-dependent inorganic pyrophosphatase (311 aa).

His-9, Asp-13, Asp-15, Asp-77, His-99, and Asp-151 together coordinate Mn(2+).

Belongs to the PPase class C family. It depends on Mn(2+) as a cofactor.

Its subcellular location is the cytoplasm. It carries out the reaction diphosphate + H2O = 2 phosphate + H(+). In Streptococcus equi subsp. equi (strain 4047), this protein is Probable manganese-dependent inorganic pyrophosphatase.